The primary structure comprises 134 residues: FK506-binding protein 2 (134 aa).

A signal peptide spans 1–19 (MRILLLSALFLSLTTLVLS). One can recognise a PPIase FKBP-type domain in the interval 39–127 (GDTVHMHYRG…IFETELVQIE (89 aa)). A Prevents secretion from ER motif is present at residues 131–134 (NDEL).

The protein belongs to the FKBP-type PPIase family. FKBP2 subfamily.

The protein resides in the endoplasmic reticulum. The enzyme catalyses [protein]-peptidylproline (omega=180) = [protein]-peptidylproline (omega=0). Inhibited by both FK506 and rapamycin. Its function is as follows. PPIases accelerate the folding of proteins. It catalyzes the cis-trans isomerization of proline imidic peptide bonds in oligopeptides. The sequence is that of FK506-binding protein 2 (fpr2) from Aspergillus fumigatus (strain ATCC MYA-4609 / CBS 101355 / FGSC A1100 / Af293) (Neosartorya fumigata).